Here is a 134-residue protein sequence, read N- to C-terminus: Profilin-2 (134 aa).

The cysteines at positions 13 and 118 are disulfide-linked. The short motif at 84-100 is the Involved in PIP2 interaction element; the sequence is AVIRGKKGSGGITIKKT. Threonine 114 carries the phosphothreonine modification.

It belongs to the profilin family. As to quaternary structure, occurs in many kinds of cells as a complex with monomeric actin in a 1:1 ratio. Post-translationally, phosphorylated by MAP kinases.

It localises to the cytoplasm. Its subcellular location is the cytoskeleton. Its function is as follows. Binds to actin and affects the structure of the cytoskeleton. At high concentrations, profilin prevents the polymerization of actin, whereas it enhances it at low concentrations. The chain is Profilin-2 from Olea europaea (Common olive).